Consider the following 139-residue polypeptide: uncharacterized protein (139 aa).

The segment covering 1-11 (MALSMSLSSDI) has biased composition (polar residues). Disordered regions lie at residues 1-80 (MALS…AAAA) and 100-139 (ASSP…LARS). Over residues 63–80 (GAGSASAGGSRLAAAAAA) the composition is skewed to low complexity.

This is an uncharacterized protein from Homo sapiens (Human).